The following is a 187-amino-acid chain: Holliday junction branch migration complex subunit RuvA (187 aa).

The interval 1–64 (MIEYIRGIIE…EDGFQIFGFK (64 aa)) is domain I. Residues 65-136 (RKEELELFEK…ELKDKVPKEV (72 aa)) are domain II. The flexible linker stretch occupies residues 136 to 139 (VVVP). Residues 140-187 (KEDSLLNEALEALLALGYTKSEAIYALSDVNCESVEQAVKEALKKLAK) form a domain III region.

Belongs to the RuvA family. Homotetramer. Forms an RuvA(8)-RuvB(12)-Holliday junction (HJ) complex. HJ DNA is sandwiched between 2 RuvA tetramers; dsDNA enters through RuvA and exits via RuvB. An RuvB hexamer assembles on each DNA strand where it exits the tetramer. Each RuvB hexamer is contacted by two RuvA subunits (via domain III) on 2 adjacent RuvB subunits; this complex drives branch migration. In the full resolvosome a probable DNA-RuvA(4)-RuvB(12)-RuvC(2) complex forms which resolves the HJ.

It is found in the cytoplasm. Its function is as follows. The RuvA-RuvB-RuvC complex processes Holliday junction (HJ) DNA during genetic recombination and DNA repair, while the RuvA-RuvB complex plays an important role in the rescue of blocked DNA replication forks via replication fork reversal (RFR). RuvA specifically binds to HJ cruciform DNA, conferring on it an open structure. The RuvB hexamer acts as an ATP-dependent pump, pulling dsDNA into and through the RuvAB complex. HJ branch migration allows RuvC to scan DNA until it finds its consensus sequence, where it cleaves and resolves the cruciform DNA. The chain is Holliday junction branch migration complex subunit RuvA from Caldanaerobacter subterraneus subsp. tengcongensis (strain DSM 15242 / JCM 11007 / NBRC 100824 / MB4) (Thermoanaerobacter tengcongensis).